Consider the following 355-residue polypeptide: Elongation factor Ts (355 aa).

The interval 82 to 85 (TDFV) is involved in Mg(2+) ion dislocation from EF-Tu.

This sequence belongs to the EF-Ts family.

It localises to the cytoplasm. Its function is as follows. Associates with the EF-Tu.GDP complex and induces the exchange of GDP to GTP. It remains bound to the aminoacyl-tRNA.EF-Tu.GTP complex up to the GTP hydrolysis stage on the ribosome. This chain is Elongation factor Ts, found in Helicobacter pylori (strain G27).